The following is a 407-amino-acid chain: Serpin-Z2 (407 aa).

Residues Met-1–Lys-28 are disordered. The span at Glu-9 to Lys-22 shows a compositional bias: polar residues. The interval Gly-344–Ile-368 is RCL.

It belongs to the serpin family.

In terms of biological role, probable serine protease inhibitor. The protein is Serpin-Z2 of Arabidopsis thaliana (Mouse-ear cress).